We begin with the raw amino-acid sequence, 446 residues long: Na(+)-translocating NADH-quinone reductase subunit A (446 aa).

It belongs to the NqrA family. As to quaternary structure, composed of six subunits; NqrA, NqrB, NqrC, NqrD, NqrE and NqrF.

The enzyme catalyses a ubiquinone + n Na(+)(in) + NADH + H(+) = a ubiquinol + n Na(+)(out) + NAD(+). In terms of biological role, NQR complex catalyzes the reduction of ubiquinone-1 to ubiquinol by two successive reactions, coupled with the transport of Na(+) ions from the cytoplasm to the periplasm. NqrA to NqrE are probably involved in the second step, the conversion of ubisemiquinone to ubiquinol. This Vibrio campbellii (strain ATCC BAA-1116) protein is Na(+)-translocating NADH-quinone reductase subunit A.